A 904-amino-acid polypeptide reads, in one-letter code: MSQQTTIRKLAELVNTPVDKLLVQLAEAGMKFSGPDQVVTSTEKMKLLGFLRRTHGKAETSAEAASEAAKKITLNRRKLQEVTVNAGRTKTTVNVEVRQKRTYVKSENEGSGRAAPMTPDEERADILRKLEESRQRNLEEQQRLAESDRVRDEAIQRKREEEQAAKDRAEAERKAAEEAAAAASAPAPVADAPTPSAAAPAARSPSSPSSAPRAARPAGASPASRPAAPARADDRSNAAKHKTRGSHVMVAGVEDDDATKRFAGQLHLSAADRARRSNVRGKPTGRPGSSSSRRGNDNGRGGSQANSGPHGFERPTAPVVREVAIGETITVADLAQKLALKGGDVVKALFKMGVMATITQSIDHDTAALVTEELGHKAVRADNADFEDALLAHAEDAQGEATSRPPVVTIMGHVDHGKTSLLDYIRRTKIASGEAGGITQHIGAYHVETGRGVISFLDTPGHAAFTSMRARGAKITDIVVLVVAADDGVMPQTKEAVAHAKAAGVPLIVAVNKIDKTGADPLRVKNELLAENVVAEEFGGDTQFIEVSAKVGTGVDTLLDAISLQAEVLELKAVAEGRASGTVIESSLDKGRGPVATVLVQQGALKRGDYLVCGIQYGRVRALFDETGHQPASAGPSIPVQVLGLSGVPEAGDDFVVVDDERLAKDVAQQRETKRRESRLVASATNRMEDILAQMGKGEGQQVLNLVIKADVQGSVEALKQSLVALSNEDIRINVIHSGVGGITESDANSAAASKATIIGFNVRADASARKIVESNGIDLRYFSIIYDVIDQVKQVASGLLGVEIREEIIGIAQVRDVFRSSKFGAVAGCMVIEGVVKRSKPIRVLRDSVVVFEGELESLRRFKENVDEVRNGTECGIGVKAYNDVKAGDQIECFERIEVARTL.

Disordered stretches follow at residues 103–122 (YVKS…PDEE), 137–252 (NLEE…MVAG), and 267–315 (HLSA…FERP). Basic and acidic residues predominate over residues 137–177 (NLEEQQRLAESDRVRDEAIQRKREEEQAAKDRAEAERKAAE). 2 stretches are compositionally biased toward low complexity: residues 178 to 230 (EAAA…AAPA) and 280 to 293 (RGKP…SSSR). One can recognise a tr-type G domain in the interval 403–572 (SRPPVVTIMG…SLQAEVLELK (170 aa)). Positions 412–419 (GHVDHGKT) are G1. 412–419 (GHVDHGKT) is a GTP binding site. Residues 437 to 441 (GITQH) form a G2 region. The tract at residues 458-461 (DTPG) is G3. Residues 458–462 (DTPGH) and 512–515 (NKID) contribute to the GTP site. Positions 512-515 (NKID) are G4. Residues 548-550 (SAK) form a G5 region.

Belongs to the TRAFAC class translation factor GTPase superfamily. Classic translation factor GTPase family. IF-2 subfamily.

It is found in the cytoplasm. In terms of biological role, one of the essential components for the initiation of protein synthesis. Protects formylmethionyl-tRNA from spontaneous hydrolysis and promotes its binding to the 30S ribosomal subunits. Also involved in the hydrolysis of GTP during the formation of the 70S ribosomal complex. This is Translation initiation factor IF-2 from Xanthomonas euvesicatoria pv. vesicatoria (strain 85-10) (Xanthomonas campestris pv. vesicatoria).